The following is a 129-amino-acid chain: Large ribosomal subunit protein uL22 (129 aa).

This sequence belongs to the universal ribosomal protein uL22 family. As to quaternary structure, part of the 50S ribosomal subunit.

Functionally, this protein binds specifically to 23S rRNA; its binding is stimulated by other ribosomal proteins, e.g. L4, L17, and L20. It is important during the early stages of 50S assembly. It makes multiple contacts with different domains of the 23S rRNA in the assembled 50S subunit and ribosome. Its function is as follows. The globular domain of the protein is located near the polypeptide exit tunnel on the outside of the subunit, while an extended beta-hairpin is found that lines the wall of the exit tunnel in the center of the 70S ribosome. This is Large ribosomal subunit protein uL22 from Sinorhizobium medicae (strain WSM419) (Ensifer medicae).